The following is a 296-amino-acid chain: Phosphoribosylaminoimidazole-succinocarboxamide synthase (296 aa).

It belongs to the SAICAR synthetase family.

The catalysed reaction is 5-amino-1-(5-phospho-D-ribosyl)imidazole-4-carboxylate + L-aspartate + ATP = (2S)-2-[5-amino-1-(5-phospho-beta-D-ribosyl)imidazole-4-carboxamido]succinate + ADP + phosphate + 2 H(+). The protein operates within purine metabolism; IMP biosynthesis via de novo pathway; 5-amino-1-(5-phospho-D-ribosyl)imidazole-4-carboxamide from 5-amino-1-(5-phospho-D-ribosyl)imidazole-4-carboxylate: step 1/2. The protein is Phosphoribosylaminoimidazole-succinocarboxamide synthase of Geotalea uraniireducens (strain Rf4) (Geobacter uraniireducens).